A 606-amino-acid polypeptide reads, in one-letter code: MKVINLIPTLMLTSLIILTLPIITTLLQNNKTNCFLYITKTAVTYAFAISLIPTLLFIQSNQEAYISNWHWMTIHTLKLSMSFKLDFFSLTFMPIALFITWSIMEFSLWYMHSDPHINRFFKYLLLFLITMLILVSANNLLQLFMGWEGVGIMSFLLISWWHGRTDANTAALQAMLYNRIGDMGFIMMMAWFTIHLNSWEFQQIFLTNPKNTTLPLLGLLLASAGKSAQFGLHPWLPSAMEGPTPVSALLHSSTMVMAGVFTLIRFYPLMENNLTIQTSTLCLGAITTLFTAICALTQNDIKKIIALSTSSQLGLMMVTIGINQPQLAFIHMCTHAFFKAMLFLSSGSIIHNLNNEQDIRKMGGLYKTMPITSTAIIIGSLALTGMPFLTGFYSKDPIIETANMSYINTWALLITLIAVSMTASYSTRIIFFALLGQPRYPPLTQVNENNPYLVNPIKRLILGSIFMGFLISMNTIPHTTPQMTMPPHLKFMALAVTLLGFTVATELNNMTHNLMFKQPSRMHTFSTMLGYYPTTTHRVLPYPSLTMSQNLATTIMDSIWLEKMIPKNLTTMQKTAASLVSNQKGLMKLYFLSFLLSITLGLLIAL.

15 consecutive transmembrane segments (helical) span residues 3 to 23 (VINL…LPII), 38 to 58 (ITKT…LLFI), 87 to 107 (FFSL…MEFS), 124 to 144 (LLLF…LQLF), 180 to 200 (IGDM…NSWE), 216 to 236 (LLGL…HPWL), 244 to 264 (TPVS…FTLI), 276 to 296 (IQTS…ICAL), 304 to 323 (IIAL…IGIN), 328 to 350 (AFIH…GSII), 369 to 389 (MPIT…MPFL), 404 to 424 (MSYI…MTAS), 460 to 480 (LILG…PHTT), 483 to 503 (MTMP…GFTV), and 586 to 606 (LMKL…LIAL).

It belongs to the complex I subunit 5 family. As to quaternary structure, core subunit of respiratory chain NADH dehydrogenase (Complex I) which is composed of 45 different subunits.

It is found in the mitochondrion inner membrane. It carries out the reaction a ubiquinone + NADH + 5 H(+)(in) = a ubiquinol + NAD(+) + 4 H(+)(out). Functionally, core subunit of the mitochondrial membrane respiratory chain NADH dehydrogenase (Complex I) which catalyzes electron transfer from NADH through the respiratory chain, using ubiquinone as an electron acceptor. Essential for the catalytic activity and assembly of complex I. The polypeptide is NADH-ubiquinone oxidoreductase chain 5 (MT-ND5) (Loxodonta africana (African elephant)).